Consider the following 358-residue polypeptide: Biotin synthase (358 aa).

A Radical SAM core domain is found at 44–272 (NRVRLNYLVN…DSEVRAAAGR (229 aa)). [4Fe-4S] cluster-binding residues include Cys-59, Cys-63, and Cys-66. Residues Cys-103, Cys-136, Cys-196, and Arg-267 each coordinate [2Fe-2S] cluster.

It belongs to the radical SAM superfamily. Biotin synthase family. In terms of assembly, homodimer. [4Fe-4S] cluster serves as cofactor. It depends on [2Fe-2S] cluster as a cofactor.

The catalysed reaction is (4R,5S)-dethiobiotin + (sulfur carrier)-SH + 2 reduced [2Fe-2S]-[ferredoxin] + 2 S-adenosyl-L-methionine = (sulfur carrier)-H + biotin + 2 5'-deoxyadenosine + 2 L-methionine + 2 oxidized [2Fe-2S]-[ferredoxin]. It participates in cofactor biosynthesis; biotin biosynthesis; biotin from 7,8-diaminononanoate: step 2/2. Its function is as follows. Catalyzes the conversion of dethiobiotin (DTB) to biotin by the insertion of a sulfur atom into dethiobiotin via a radical-based mechanism. This chain is Biotin synthase, found in Cutibacterium acnes (strain DSM 16379 / KPA171202) (Propionibacterium acnes).